The following is a 31-amino-acid chain: Cyclotide vibi-G (31 aa).

The cyclopeptide (Gly-Asn) cross-link spans 1–31; it reads GTFPCGESCVFIPCLTSAIGCSCKSKVCYKN. Cystine bridges form between cysteine 5–cysteine 21, cysteine 9–cysteine 23, and cysteine 14–cysteine 28.

This is a cyclic peptide.

Its function is as follows. Probably participates in a plant defense mechanism. Has cytotoxic activity, active against a human lymphoma cell line with an IC(50) of 0.96 uM. This Viola biflora (Yellow wood violet) protein is Cyclotide vibi-G.